The chain runs to 754 residues: Phosphatidylinositol 4-phosphate 5-kinase 7 (754 aa).

8 MORN repeats span residues 16–38 (YSGEVKGIIPNGKGKYAWSDGTI), 39–61 (YEGDWDEGKISGKGKLIWSSGAK), 62–84 (YEGDFSGGYLHGFGTMTSPDESV), 85–107 (YSGAWRMNVRHGLGRKEYCNSDL), 108–130 (YDGLWKEGLQDGRGSYSWTNGNR), 131–153 (YIGNWKKGKMCERGVMRWENGDL), 154–176 (YDGFWLNGFRHGSGVYKFADGCL), and 177–198 (YYGTWSRGLKDGKGVFYPAGTK). Residues 329–750 (GEHNYYLMLN…RFVNFLHKVF (422 aa)) form the PIPK domain. Residues 710–731 (YNTKKKVEHTCKSLQYDPMTIS) form an activation loop region.

The enzyme catalyses a 1,2-diacyl-sn-glycero-3-phospho-(1D-myo-inositol 4-phosphate) + ATP = a 1,2-diacyl-sn-glycero-3-phospho-(1D-myo-inositol-4,5-bisphosphate) + ADP + H(+). The sequence is that of Phosphatidylinositol 4-phosphate 5-kinase 7 (PIP5K7) from Arabidopsis thaliana (Mouse-ear cress).